We begin with the raw amino-acid sequence, 267 residues long: Exosome complex component Rrp42 (267 aa).

This sequence belongs to the RNase PH family. Rrp42 subfamily. In terms of assembly, component of the archaeal exosome complex. Forms a hexameric ring-like arrangement composed of 3 Rrp41-Rrp42 heterodimers. The hexameric ring associates with a trimer of Rrp4 and/or Csl4 subunits.

Its subcellular location is the cytoplasm. Functionally, non-catalytic component of the exosome, which is a complex involved in RNA degradation. Contributes to the structuring of the Rrp41 active site. The sequence is that of Exosome complex component Rrp42 from Methanopyrus kandleri (strain AV19 / DSM 6324 / JCM 9639 / NBRC 100938).